The primary structure comprises 306 residues: Phenylcoumaran benzylic ether reductase IRL1 (306 aa).

NADP(+) contacts are provided by residues 10-16, R35, and K44; that span reads GATGYIG. The active-site Proton acceptor is K132. R136 is a binding site for NADP(+).

Belongs to the NmrA-type oxidoreductase family. Isoflavone reductase subfamily. As to expression, highly expressed in sclerotesta. Expressed in roots, and two-to-four year stems.

The enzyme catalyses (-)-dehydrodiconiferyl alcohol + NADPH + H(+) = (S)-isodihydrodehydrodiconiferyl alcohol + NADP(+). It carries out the reaction (+)-dehydrodiconiferyl alcohol + NADPH + H(+) = (R)-isodihydrodehydrodiconiferyl alcohol + NADP(+). It catalyses the reaction (2R,3S)-dihydrodehydrodiconiferyl alcohol + NADPH + H(+) = (S)-tetrahydrodehydrodiconiferyl alcohol + NADP(+). The catalysed reaction is (2S,3R)-dihydrodehydrodiconiferyl alcohol + NADPH + H(+) = (R)-tetrahydrodehydrodiconiferyl alcohol + NADP(+). Functionally, oxidoreductase involved in lignan biosynthesis. Catalyzes the NADPH-dependent reduction of phenylcoumaran benzylic ethers. Converts dehydrodiconiferyl alcohol (DDC) to isodihydrodehydrodiconiferyl alcohol (IDDDC), and dihydrodehydrodiconiferyl alcohol (DDDC) to tetrahydrodehydrodiconiferyl alcohol (TDDC). May regulate changes in lignin content and accumulation of flavonoids. This chain is Phenylcoumaran benzylic ether reductase IRL1, found in Ginkgo biloba (Ginkgo).